We begin with the raw amino-acid sequence, 316 residues long: Retinol dehydrogenase 12 (316 aa).

An NADP(+)-binding site is contributed by 46-52; the sequence is GANTGIG. A substrate-binding site is contributed by Ser175. Tyr200 (proton acceptor) is an active-site residue.

Belongs to the short-chain dehydrogenases/reductases (SDR) family. In terms of tissue distribution, widely expressed, mostly in retina, kidney, brain, skeletal muscle, pancreas and stomach.

The protein resides in the endoplasmic reticulum membrane. The enzyme catalyses all-trans-retinol + NADP(+) = all-trans-retinal + NADPH + H(+). The catalysed reaction is 11-cis-retinol + NADP(+) = 11-cis-retinal + NADPH + H(+). It catalyses the reaction 9-cis-retinol + NADP(+) = 9-cis-retinal + NADPH + H(+). It carries out the reaction a 4-hydroxynonen-1-ol + NADP(+) = a 4-hydroxynonenal + NADPH + H(+). The enzyme catalyses (E)-non-2-en-1-ol + NADP(+) = (E)-non-2-enal + NADPH + H(+). The catalysed reaction is (Z)-non-6-en-1-ol + NADP(+) = (Z)-non-6-enal + NADPH + H(+). It catalyses the reaction nonan-1-ol + NADP(+) = nonanal + NADPH + H(+). It functions in the pathway cofactor metabolism; retinol metabolism. Functionally, retinoids dehydrogenase/reductase with a clear preference for NADP. Displays high activity towards 9-cis, 11-cis and all-trans-retinal. Shows very weak activity towards 13-cis-retinol. Also exhibits activity, albeit with lower affinity than for retinaldehydes, towards lipid peroxidation products (C9 aldehydes) such as 4-hydroxynonenal and trans-2-nonenal. May play an important function in photoreceptor cells to detoxify 4-hydroxynonenal and potentially other toxic aldehyde products resulting from lipid peroxidation. Has no dehydrogenase activity towards steroids. The protein is Retinol dehydrogenase 12 (RDH12) of Homo sapiens (Human).